The chain runs to 302 residues: GrpE protein homolog 1, mitochondrial (302 aa).

A mitochondrion-targeting transit peptide spans 1–39; that stretch reads MLVSRVLSRVSRSAGLRSSFSSVVTPKRNQIPIVASRFH. The disordered stretch occupies residues 77-97; sequence SAEPKGNESNTEVPKTGETSE.

The protein belongs to the GrpE family. In terms of assembly, probable component of the PAM complex, at least composed of SSC1 (mtHsp70), MGE1, TIM44, PAM16/TIM16, PAM17 and PAM18/TIM14. Interacts with SSQ1.

The protein resides in the mitochondrion matrix. Its function is as follows. Essential component of the PAM complex, a complex required for the translocation of transit peptide-containing proteins from the inner membrane into the mitochondrial matrix in an ATP-dependent manner. Seems to control the nucleotide-dependent binding of mitochondrial HSP70 to substrate proteins. Binds ATP. Interacts with copper ions Cu(2+). This Arabidopsis thaliana (Mouse-ear cress) protein is GrpE protein homolog 1, mitochondrial.